The following is a 631-amino-acid chain: 1-deoxy-D-xylulose-5-phosphate synthase (631 aa).

The tract at residues 1-21 (MPTTFHEIPRERPLTPLLDSA) is disordered. Residues H87 and 128-130 (GHS) contribute to the thiamine diphosphate site. D159 contacts Mg(2+). Residues 160–161 (GA), N188, F295, and E377 contribute to the thiamine diphosphate site. Mg(2+) is bound at residue N188.

This sequence belongs to the transketolase family. DXPS subfamily. As to quaternary structure, homodimer. Requires Mg(2+) as cofactor. Thiamine diphosphate serves as cofactor.

The catalysed reaction is D-glyceraldehyde 3-phosphate + pyruvate + H(+) = 1-deoxy-D-xylulose 5-phosphate + CO2. It functions in the pathway metabolic intermediate biosynthesis; 1-deoxy-D-xylulose 5-phosphate biosynthesis; 1-deoxy-D-xylulose 5-phosphate from D-glyceraldehyde 3-phosphate and pyruvate: step 1/1. Its function is as follows. Catalyzes the acyloin condensation reaction between C atoms 2 and 3 of pyruvate and glyceraldehyde 3-phosphate to yield 1-deoxy-D-xylulose-5-phosphate (DXP). The polypeptide is 1-deoxy-D-xylulose-5-phosphate synthase (Ectopseudomonas mendocina (strain ymp) (Pseudomonas mendocina)).